The following is a 167-amino-acid chain: Ubiquitin-fold modifier-conjugating enzyme 1 (167 aa).

Catalysis depends on Cys-116, which acts as the Glycyl thioester intermediate. Lys-122 is covalently cross-linked (Glycyl lysine isopeptide (Lys-Gly) (interchain with G-Cter in UFM1)).

This sequence belongs to the ubiquitin-conjugating enzyme family. UFC1 subfamily. Interacts with UBA5 (via C-terminus). Interacts with UFL1. Interacts with UFM1. Interacts with KIRREL3. Ufmylated at Lys-122. Deufmylated by UFSP1.

E2-like enzyme which specifically catalyzes the second step in ufmylation. Accepts the ubiquitin-like modifier UFM1 from the E1 enzyme UBA5 and forms an intermediate with UFM1 via a thioester linkage. Ufmylation is involved in various processes, such as ribosome recycling, response to DNA damage, interferon response or reticulophagy (also called ER-phagy). This Rattus norvegicus (Rat) protein is Ubiquitin-fold modifier-conjugating enzyme 1.